Consider the following 143-residue polypeptide: Large ribosomal subunit protein uL11 (143 aa).

The protein belongs to the universal ribosomal protein uL11 family. In terms of assembly, part of the ribosomal stalk of the 50S ribosomal subunit. Interacts with L10 and the large rRNA to form the base of the stalk. L10 forms an elongated spine to which L12 dimers bind in a sequential fashion forming a multimeric L10(L12)X complex. Post-translationally, one or more lysine residues are methylated.

Functionally, forms part of the ribosomal stalk which helps the ribosome interact with GTP-bound translation factors. The polypeptide is Large ribosomal subunit protein uL11 (Ralstonia pickettii (strain 12J)).